A 179-amino-acid polypeptide reads, in one-letter code: O-acetyl-ADP-ribose deacetylase (179 aa).

A Macro domain is found at 1 to 175; that stretch reads MTSRLQVIQG…LYARLLTQQG (175 aa). Residues 11–12, Asn-25, 33–35, and 122–126 contribute to the substrate site; these read DI, GVD, and STGVY. The Proton acceptor role is filled by Asp-35.

It belongs to the MacroD-type family. YmdB subfamily. In terms of assembly, homodimer. Interacts with RNase III.

The catalysed reaction is 3''-O-acetyl-ADP-D-ribose + H2O = ADP-D-ribose + acetate + H(+). It catalyses the reaction 2''-O-acetyl-ADP-D-ribose + H2O = ADP-D-ribose + acetate + H(+). In terms of biological role, deacetylates O-acetyl-ADP ribose to yield ADP-ribose and free acetate. Down-regulates ribonuclease 3 (RNase III) activity. Acts by interacting directly with the region of the ribonuclease that is required for dimerization/activation. The polypeptide is O-acetyl-ADP-ribose deacetylase (Salmonella typhi).